Reading from the N-terminus, the 1792-residue chain is Non-reducing polyketide synthase aptA (1792 aa).

Positions 1–395 (MKDNTHSTTL…PRSFAHSKLA (395 aa)) are N-terminal acylcarrier protein transacylase domain (SAT). The Ketosynthase family 3 (KS3) domain occupies 391–824 (HSKLAVVGMA…GGNTTVLLED (434 aa)). Residues cysteine 564, histidine 699, and histidine 742 each act as for beta-ketoacyl synthase activity in the active site. The interval 926–1243 (VFAFTGQGAF…NLVALHLAGC (318 aa)) is malonyl-CoA:ACP transacylase (MAT) domain. The product template (PT) domain stretch occupies residues 1308-1625 (TSLIHEIIEE…PRLLMDRFFS (318 aa)). Positions 1312 to 1447 (HEIIEETIGE…GSVRFEADAE (136 aa)) are N-terminal hotdog fold. The PKS/mFAS DH domain occupies 1312-1621 (HEIIEETIGE…FRRVPRLLMD (310 aa)). The active-site Proton acceptor; for dehydratase activity is the histidine 1344. Residues 1475 to 1621 (QASQLSKALS…FRRVPRLLMD (147 aa)) are C-terminal hotdog fold. The active-site Proton donor; for dehydratase activity is the aspartate 1533. The segment covering 1634–1649 (VAASASSAPKTATKHA) has biased composition (low complexity). Positions 1634 to 1716 (VAASASSAPK…GPNGTTSQPE (83 aa)) are disordered. The span at 1664-1684 (TPSSLPTVQAQNTSPPQQVTP) shows a compositional bias: polar residues. A compositionally biased stretch (basic and acidic residues) spans 1694–1705 (TPEEEKPGKADA). One can recognise a Carrier domain in the interval 1715-1792 (PEATGVVGQC…DMMDWLEQYC (78 aa)). Serine 1752 is modified (O-(pantetheine 4'-phosphoryl)serine).

Requires pantetheine 4'-phosphate as cofactor.

The enzyme catalyses holo-[ACP] + 8 malonyl-CoA + acetyl-CoA + 8 H(+) = 3,6,8,9-tetrahydroxy-1-oxo-3-(2-oxopropyl)-1,2,3,4-tetrahydroanthracene-2-carboxyl-[ACP] + 8 CO2 + 9 CoA + 2 H2O. It participates in secondary metabolite biosynthesis. Functionally, non-reducing polyketide synthase (NRPKS); part of the gene cluster that mediates the biosynthesis of asperthecin, an anthraquinone pigment. Catalyzes the formation of the aromatic polyketide from acetyl coenzyme A and seven malonyl coenzyme A molecules. Through its product template (PT) domain, catalyzes the cyclization of the polyketide backbone via C6-C11 aldolcondensation. Polyketide is subsequently hydrolyzed from the NRPKS by the action of the hydrolase aptB into endocrocin-9-anthrone. Endocrocin-9-anthrone is then oxidized into endocrocin by aptC. Endocrocin is likely to decarboxylate spontaneously to form emodin which explains why there is no decarboxylase in the asperthecin biosynthesis cluster. Finally, aptC or another endogenous oxygenase catalyzes additional oxidation steps to form asperthecin. The polypeptide is Non-reducing polyketide synthase aptA (Emericella nidulans (strain FGSC A4 / ATCC 38163 / CBS 112.46 / NRRL 194 / M139) (Aspergillus nidulans)).